Consider the following 185-residue polypeptide: Elongation factor P (185 aa).

This sequence belongs to the elongation factor P family.

It localises to the cytoplasm. It participates in protein biosynthesis; polypeptide chain elongation. Functionally, involved in peptide bond synthesis. Stimulates efficient translation and peptide-bond synthesis on native or reconstituted 70S ribosomes in vitro. Probably functions indirectly by altering the affinity of the ribosome for aminoacyl-tRNA, thus increasing their reactivity as acceptors for peptidyl transferase. The polypeptide is Elongation factor P (Salinispora arenicola (strain CNS-205)).